Reading from the N-terminus, the 1616-residue chain is DNA (cytosine-5)-methyltransferase 1 (1616 aa).

The tract at residues 1-120 is interaction with DMAP1; it reads MPARTAPARV…NQARSEARRV (120 aa). The segment at 1-148 is interaction with DNMT3A; that stretch reads MPARTAPARV…RRSKSDGEAK (148 aa). Interaction with the PRC2/EED-EZH2 complex regions lie at residues 1-336 and 308-606; these read MPAR…TEKK and NPQI…TIRH. One can recognise a DMAP1-binding domain in the interval 16 to 109; that stretch reads PAISLPDDVR…NREVNGRLEN (94 aa). The residue at position 70 (lysine 70) is an N6,N6-dimethyllysine. A disordered region spans residues 103–349; that stretch reads VNGRLENGNQ…AKTVMNSKTH (247 aa). A phosphoserine mark is found at serine 127 and serine 133. Threonine 137 is modified (phosphothreonine). Residue serine 141 is modified to Phosphoserine. Lysine 142 is modified (N6-methyllysine; by SETD7). The residue at position 143 (serine 143) is a Phosphoserine; by PKB/AKT1. The tract at residues 149–217 is interaction with DNMT3B; the sequence is PEPSPSPRIT…TSRERVARPL (69 aa). Residues serine 152 and serine 154 each carry the phosphoserine modification. Position 160 is an N6-acetyllysine (lysine 160). The interval 163–174 is interaction with PCNA; it reads RQTTITSHFAKG. A Phosphothreonine modification is found at threonine 166. N6-acetyllysine occurs at positions 173 and 188. Residues 177-205 carry the Nuclear localization signal motif; it reads KRKPQEESERAKSDESIKEEDKDQDEKRR. Composition is skewed to basic and acidic residues over residues 179–214, 221–267, and 281–306; these read KPQE…ERVA, EPER…REAR, and KDEK…EPEK. Lysine 259 carries the post-translational modification N6-acetyllysine; alternate. A Glycyl lysine isopeptide (Lys-Gly) (interchain with G-Cter in SUMO2); alternate cross-link involves residue lysine 259. Residues 310–502 are homodimerization; the sequence is QISDEKDEDE…PEYAPIFGLM (193 aa). Serine 312 carries the phosphoserine modification. Basic and acidic residues predominate over residues 321-337; sequence EEKRRKTTPKEPTEKKM. The segment at 331–550 is DNA replication foci-targeting sequence; it reads EPTEKKMARA…NLNRFTEDSL (220 aa). The Zn(2+) site is built by cysteine 353 and cysteine 356. Lysine 366 carries the post-translational modification N6-acetyllysine. 2 positions are modified to phosphoserine: serine 394 and serine 398. Positions 414 and 418 each coordinate Zn(2+). 2 positions are modified to phosphoserine: serine 509 and serine 549. The CXXC-type zinc-finger motif lies at 646–692; it reads NAFKRRRCGVCEVCQQPECGKCKACKDMVKFGGSGRSKQACQERRCP. A required for activity region spans residues 651–697; that stretch reads RRCGVCEVCQQPECGKCKACKDMVKFGGSGRSKQACQERRCPNMAMK. 8 residues coordinate Zn(2+): cysteine 653, cysteine 656, cysteine 659, cysteine 664, cysteine 667, cysteine 670, cysteine 686, and cysteine 691. The interval 693–754 is autoinhibitory linker; the sequence is NMAMKEADDD…SYYKKVCIDA (62 aa). A compositionally biased stretch (acidic residues) spans 699 to 709; that stretch reads ADDDEEVDDNI. The disordered stretch occupies residues 699 to 729; that stretch reads ADDDEEVDDNIPEMPSPKKMHQGKKKKQNKN. Serine 714 is modified (phosphoserine). Residues 716-728 show a composition bias toward basic residues; that stretch reads KKMHQGKKKKQNK. The residue at position 732 (serine 732) is a Phosphoserine. Lysine 749 is modified (N6-acetyllysine). The BAH 1 domain maps to 755–880; sequence ETLEVGDCVS…QDYARFESPP (126 aa). Serine 878 is subject to Phosphoserine. N6-acetyllysine occurs at positions 891, 957, 961, 975, and 1054. Residues 972–1100 enclose the BAH 2 domain; that stretch reads HYRKYSDYIK…AKSKSFEDPP (129 aa). The interval 1095 to 1130 is disordered; the sequence is SFEDPPNHARSPGNKGKGKGKGKGKPKSQACEPSEP. Tandem repeats lie at residues 1109 to 1110, 1111 to 1112, 1113 to 1114, 1115 to 1116, and 1117 to 1118. The interval 1109–1120 is 6 X 2 AA tandem repeats of K-G; sequence KGKGKGKGKGKP. Over residues 1110–1120 the composition is skewed to basic residues; that stretch reads GKGKGKGKGKP. 3 positions are modified to N6-acetyllysine: lysine 1111, lysine 1113, and lysine 1115. Lysine 1117 carries the post-translational modification N6-acetyllysine; by EHMT2. N6-acetyllysine occurs at positions 1119 and 1121. The stretch at 1119 to 1120 is one 6; approximate repeat; that stretch reads KP. An interaction with the PRC2/EED-EZH2 complex region spans residues 1121 to 1616; it reads KSQACEPSEP…KIKEEEAAKD (496 aa). One can recognise an SAM-dependent MTase C5-type domain in the interval 1139–1599; sequence LRTLDVFSGC…LEIKLCMLAK (461 aa). The interval 1139 to 1616 is catalytic; sequence LRTLDVFSGC…KIKEEEAAKD (478 aa). S-adenosyl-L-methionine contacts are provided by residues serine 1146, 1150 to 1151, 1168 to 1169, 1190 to 1191, and cysteine 1191; these read GL, EM, and DC. Residue cysteine 1226 is part of the active site. Residues lysine 1349 and lysine 1415 each carry the N6-acetyllysine modification. Positions 1578 and 1580 each coordinate S-adenosyl-L-methionine. Residue lysine 1609 forms a Glycyl lysine isopeptide (Lys-Gly) (interchain with G-Cter in SUMO2) linkage.

The protein belongs to the class I-like SAM-binding methyltransferase superfamily. C5-methyltransferase family. Homodimer. Forms a stable complex with E2F1, BB1 and HDAC1. Forms a complex with DMAP1 and HDAC2, with direct interaction. Interacts with the PRC2/EED-EZH2 complex. Probably part of a corepressor complex containing ZNF304, TRIM28, SETDB1 and DNMT1. Interacts with UHRF1; promoting its recruitment to hemimethylated DNA. Interacts with USP7, promoting its deubiquitination. Interacts with PCNA. Interacts with MBD2 and MBD3. Interacts with DNMT3A and DNMT3B. Interacts with UBC9. Interacts with CSNK1D. Interacts with HDAC1. Interacts with BAZ2A/TIP5. Interacts with SIRT7. Interacts with ZNF263; recruited to the SIX3 promoter along with other proteins involved in chromatin modification and transcriptional corepression where it contributes to transcriptional repression. Interacts with L3MBTL3 and DCAF5; the interaction requires DNMT1 methylation at Lys-142 and is necessary to target DNMT1 for ubiquitination by the CRL4-DCAF5 E3 ubiquitin ligase complex and proteasomal degradation. Interacts with PHF20L1; the interaction requires DNMT1 methylation at Lys-142 and protects DNMT1 from ubiquitination and proteasomal degradation. In terms of processing, sumoylated; sumoylation increases activity. Post-translationally, acetylation on multiple lysines, mainly by KAT2B/PCAF, regulates cell cycle G(2)/M transition. Deacetylation of Lys-1349 and Lys-1415 by SIRT1 increases methyltransferase activity. Phosphorylation of Ser-154 by CDKs is important for enzymatic activity and protein stability. Phosphorylation of Ser-143 by AKT1 prevents methylation by SETD7 thereby increasing DNMT1 stability. In terms of processing, methylation at Lys-142 by SETD7 is necessary for the regulation of DNMT1 proteasomal degradation. Post-translationally, ubiquitinated by UHRF1; interaction with USP7 counteracts ubiquitination by UHRF1 by promoting deubiquitination and preventing degradation by the proteasome. Ubiquitous; highly expressed in fetal tissues, heart, kidney, placenta, peripheral blood mononuclear cells, and expressed at lower levels in spleen, lung, brain, small intestine, colon, liver, and skeletal muscle. Isoform 2 is less expressed than isoform 1.

It is found in the nucleus. It catalyses the reaction a 2'-deoxycytidine in DNA + S-adenosyl-L-methionine = a 5-methyl-2'-deoxycytidine in DNA + S-adenosyl-L-homocysteine + H(+). Methylates CpG residues. Preferentially methylates hemimethylated DNA. Associates with DNA replication sites in S phase maintaining the methylation pattern in the newly synthesized strand, that is essential for epigenetic inheritance. Associates with chromatin during G2 and M phases to maintain DNA methylation independently of replication. It is responsible for maintaining methylation patterns established in development. DNA methylation is coordinated with methylation of histones. Mediates transcriptional repression by direct binding to HDAC2. In association with DNMT3B and via the recruitment of CTCFL/BORIS, involved in activation of BAG1 gene expression by modulating dimethylation of promoter histone H3 at H3K4 and H3K9. Probably forms a corepressor complex required for activated KRAS-mediated promoter hypermethylation and transcriptional silencing of tumor suppressor genes (TSGs) or other tumor-related genes in colorectal cancer (CRC) cells. Also required to maintain a transcriptionally repressive state of genes in undifferentiated embryonic stem cells (ESCs). Associates at promoter regions of tumor suppressor genes (TSGs) leading to their gene silencing. Promotes tumor growth. The chain is DNA (cytosine-5)-methyltransferase 1 (DNMT1) from Homo sapiens (Human).